The chain runs to 365 residues: tRNA/tmRNA (uracil-C(5))-methyltransferase (365 aa).

The S-adenosyl-L-methionine site is built by glutamine 189, tyrosine 217, asparagine 222, glutamate 238, and aspartate 298. Cysteine 323 serves as the catalytic Nucleophile. The active-site Proton acceptor is glutamate 357.

Belongs to the class I-like SAM-binding methyltransferase superfamily. RNA M5U methyltransferase family. TrmA subfamily.

It carries out the reaction uridine(54) in tRNA + S-adenosyl-L-methionine = 5-methyluridine(54) in tRNA + S-adenosyl-L-homocysteine + H(+). It catalyses the reaction uridine(341) in tmRNA + S-adenosyl-L-methionine = 5-methyluridine(341) in tmRNA + S-adenosyl-L-homocysteine + H(+). Functionally, dual-specificity methyltransferase that catalyzes the formation of 5-methyluridine at position 54 (m5U54) in all tRNAs, and that of position 341 (m5U341) in tmRNA (transfer-mRNA). The sequence is that of tRNA/tmRNA (uracil-C(5))-methyltransferase from Shewanella amazonensis (strain ATCC BAA-1098 / SB2B).